Reading from the N-terminus, the 216-residue chain is N-glycosylase/DNA lyase (216 aa).

Residues Gln27, Ser48, and Trp59 each contribute to the 8-oxoguanine site. Residues 106–170 (EHYYENMVAL…LDYRLKKINP (65 aa)) are helix-hairpin-helix. Lys130 functions as the Schiff-base intermediate with DNA in the catalytic mechanism. 2 residues coordinate 8-oxoguanine: Phe134 and Pro160. The active site involves Asp162. Residues Asp190 and Trp194 each contribute to the 8-oxoguanine site.

It belongs to the archaeal N-glycosylase/DNA lyase (AGOG) family.

It carries out the reaction 2'-deoxyribonucleotide-(2'-deoxyribose 5'-phosphate)-2'-deoxyribonucleotide-DNA = a 3'-end 2'-deoxyribonucleotide-(2,3-dehydro-2,3-deoxyribose 5'-phosphate)-DNA + a 5'-end 5'-phospho-2'-deoxyribonucleoside-DNA + H(+). Its function is as follows. DNA repair enzyme that is part of the base excision repair (BER) pathway; protects from oxidative damage by removing the major product of DNA oxidation, 8-oxoguanine (GO), from single- and double-stranded DNA substrates. This chain is N-glycosylase/DNA lyase, found in Nanoarchaeum equitans (strain Kin4-M).